Here is a 394-residue protein sequence, read N- to C-terminus: Cell division protein FtsZ (394 aa).

GTP-binding positions include 21–25 (GGGGN), 108–110 (GTG), Glu-139, Arg-143, and Asp-187.

It belongs to the FtsZ family. In terms of assembly, homodimer. Polymerizes to form a dynamic ring structure in a strictly GTP-dependent manner. Interacts directly with several other division proteins. Interacts with the SulA inhibitor.

The protein localises to the cytoplasm. Its function is as follows. Essential cell division protein that forms a contractile ring structure (Z ring) at the future cell division site. The regulation of the ring assembly controls the timing and the location of cell division. One of the functions of the FtsZ ring is to recruit other cell division proteins to the septum to produce a new cell wall between the dividing cells. Binds GTP and shows GTPase activity. This chain is Cell division protein FtsZ, found in Pseudomonas aeruginosa (strain ATCC 15692 / DSM 22644 / CIP 104116 / JCM 14847 / LMG 12228 / 1C / PRS 101 / PAO1).